The sequence spans 492 residues: Cytochrome P450 2B19 (492 aa).

At serine 129 the chain carries Phosphoserine; by PKA. Heme is bound at residue cysteine 437.

This sequence belongs to the cytochrome P450 family. It depends on heme as a cofactor. In terms of tissue distribution, expressed only in differentiated keratinocytes in skin.

Its subcellular location is the endoplasmic reticulum membrane. It localises to the microsome membrane. The catalysed reaction is an organic molecule + reduced [NADPH--hemoprotein reductase] + O2 = an alcohol + oxidized [NADPH--hemoprotein reductase] + H2O + H(+). Functionally, cytochromes P450 are a group of heme-thiolate monooxygenases. In liver microsomes, this enzyme is involved in an NADPH-dependent electron transport pathway. It oxidizes a variety of structurally unrelated compounds, including steroids, fatty acids, and xenobiotics. This chain is Cytochrome P450 2B19 (Cyp2b19), found in Mus musculus (Mouse).